We begin with the raw amino-acid sequence, 292 residues long: NAD kinase (292 aa).

Asp-73 (proton acceptor) is an active-site residue. Residues 73–74, 147–148, His-158, Arg-175, Asp-177, 188–193, and Gln-247 each bind NAD(+); these read DG, NE, and TAYSLS.

This sequence belongs to the NAD kinase family. Requires a divalent metal cation as cofactor.

The protein localises to the cytoplasm. The catalysed reaction is NAD(+) + ATP = ADP + NADP(+) + H(+). Its function is as follows. Involved in the regulation of the intracellular balance of NAD and NADP, and is a key enzyme in the biosynthesis of NADP. Catalyzes specifically the phosphorylation on 2'-hydroxyl of the adenosine moiety of NAD to yield NADP. This chain is NAD kinase, found in Shigella boydii serotype 18 (strain CDC 3083-94 / BS512).